An 80-amino-acid polypeptide reads, in one-letter code: MAFLKKSLFLVLFLGIVSLSICEEEKREGEEEEKQEEENEELSEEELRERRALLDKLKSLGKVVGKVALGVVQNYLNPRQ.

A signal peptide spans 1–22; sequence MAFLKKSLFLVLFLGIVSLSIC. Positions 23 to 49 are excised as a propeptide; it reads EEEKREGEEEEKQEEENEELSEEELRE.

This sequence belongs to the frog skin active peptide (FSAP) family. Dermaseptin subfamily. As to expression, expressed by the skin glands.

The protein resides in the secreted. Functionally, has antibacterial activity. The sequence is that of Raniseptin-6 from Boana raniceps (Chaco tree frog).